Reading from the N-terminus, the 1017-residue chain is Sodium/potassium-transporting ATPase subunit alpha-2 (1017 aa).

The interval 1–31 (MDGREYSPAATTSENGGGRRKQKEKELDELK) is disordered. Topologically, residues 1 to 82 (MDGREYSPAA…NALTPPPTTP (82 aa)) are cytoplasmic. Residues 77–79 (PPP) form an interaction with phosphoinositide-3 kinase region. Residues 83 to 103 (EWVKFCRQLFGGFSILLWIGA) form a helical membrane-spanning segment. At 104 to 126 (ILCFLAYGIQAAMEDEPSNDNLY) the chain is on the extracellular side. Residues 127–147 (LGVVLAAVVIVTGCFSYYQEA) form a helical membrane-spanning segment. At 148-283 (KSSKIMDSFK…VGRTPIAMEI (136 aa)) the chain is on the cytoplasmic side. A disordered region spans residues 207–228 (KVDNSSLTGESEPQTRSPEFTH). Residues 209 to 224 (DNSSLTGESEPQTRSP) show a composition bias toward polar residues. The helical transmembrane segment at 284 to 303 (EHFIRLITGVAVFLGLSFFI) threads the bilayer. Residues 304–315 (LSLILGYTWLEA) are Extracellular-facing. Residues 316–333 (VIFLIGIIVANVPEGLLA) form a helical membrane-spanning segment. Residues 334–766 (TVTVCLTLTA…EEGRLIFDNL (433 aa)) are Cytoplasmic-facing. Aspartate 371 acts as the 4-aspartylphosphate intermediate in catalysis. An ATP-binding site is contributed by lysine 502. 2 residues coordinate Mg(2+): aspartate 711 and aspartate 715. Residues 767–786 (KKSIAYTLTSNIPEITPFLL) form a helical membrane-spanning segment. The Extracellular segment spans residues 787-796 (FIIANIPLPL). The helical transmembrane segment at 797-817 (GTVTILCIDLGTDMVPAISLA) threads the bilayer. Residues 818–837 (YEAAESDIMKRQPRNPRTDK) lie on the Cytoplasmic side of the membrane. A helical membrane pass occupies residues 838–860 (LVNERLISMAYGQIGMIQALGGF). The Extracellular segment spans residues 861 to 912 (FTYFVILAENGFLPARLLGVRLAWDDRSTNDLEDSYGQEWTYEQRKVVEFTC). A helical transmembrane segment spans residues 913 to 932 (HTAFFASIVVVQWADLIICK). Over 933-945 (TRRNSVFQQGMKN) the chain is Cytoplasmic. A Phosphoserine; by PKA modification is found at serine 937. A helical transmembrane segment spans residues 946 to 964 (KILIFGLLEETALAAFLSY). At 965-979 (CPGMGVALRMYPLKV) the chain is on the extracellular side. A helical membrane pass occupies residues 980–1000 (TWWFCAFPYSLLIFAYDEVRK). Residues 1001 to 1017 (LILRRYPGGWVEKETYY) lie on the Cytoplasmic side of the membrane.

It belongs to the cation transport ATPase (P-type) (TC 3.A.3) family. Type IIC subfamily. In terms of assembly, the sodium/potassium-transporting ATPase is composed of a catalytic alpha subunit, an auxiliary non-catalytic beta subunit and an additional regulatory subunit.

The protein resides in the membrane. It localises to the cell membrane. The enzyme catalyses K(+)(out) + Na(+)(in) + ATP + H2O = K(+)(in) + Na(+)(out) + ADP + phosphate + H(+). This is the catalytic component of the active enzyme, which catalyzes the hydrolysis of ATP coupled with the exchange of sodium and potassium ions across the plasma membrane. This action creates the electrochemical gradient of sodium and potassium ions, providing the energy for active transport of various nutrients. This Gallus gallus (Chicken) protein is Sodium/potassium-transporting ATPase subunit alpha-2 (ATP1A2).